A 173-amino-acid polypeptide reads, in one-letter code: Co-chaperone protein HscB homolog (173 aa).

The region spanning 2-74 (NYFELFSLSP…ISRAEHMLSL (73 aa)) is the J domain.

This sequence belongs to the HscB family. In terms of assembly, interacts with HscA and stimulates its ATPase activity.

Functionally, co-chaperone involved in the maturation of iron-sulfur cluster-containing proteins. Seems to help targeting proteins to be folded toward HscA. The chain is Co-chaperone protein HscB homolog from Shewanella loihica (strain ATCC BAA-1088 / PV-4).